A 74-amino-acid chain; its full sequence is Small heat shock protein hspG10 (74 aa).

Residues 31–74 enclose the sHSP domain; that stretch reads KTIIDILPSMDVTMTNDKLIIETELAGISKDHIEIDIKDSILTI.

Belongs to the small heat shock protein (HSP20) family.

The chain is Small heat shock protein hspG10 (hspG10) from Dictyostelium discoideum (Social amoeba).